A 229-amino-acid polypeptide reads, in one-letter code: Uracil-DNA glycosylase (229 aa).

D70 (proton acceptor) is an active-site residue.

It belongs to the uracil-DNA glycosylase (UDG) superfamily. UNG family.

It is found in the cytoplasm. It carries out the reaction Hydrolyzes single-stranded DNA or mismatched double-stranded DNA and polynucleotides, releasing free uracil.. Its function is as follows. Excises uracil residues from the DNA which can arise as a result of misincorporation of dUMP residues by DNA polymerase or due to deamination of cytosine. This is Uracil-DNA glycosylase from Chlamydia trachomatis serovar L2b (strain UCH-1/proctitis).